The sequence spans 469 residues: Adenosylhomocysteinase (469 aa).

Substrate-binding residues include Thr63, Asp139, and Glu164. 165-167 provides a ligand contact to NAD(+); it reads TTT. Substrate is bound by residues Lys194 and Asp198. NAD(+) contacts are provided by residues Asn199, 228–233, Glu251, Asn300, 321–323, and Asn375; these read GYGDVG and IGH.

This sequence belongs to the adenosylhomocysteinase family. NAD(+) is required as a cofactor.

The protein resides in the cytoplasm. The catalysed reaction is S-adenosyl-L-homocysteine + H2O = L-homocysteine + adenosine. It functions in the pathway amino-acid biosynthesis; L-homocysteine biosynthesis; L-homocysteine from S-adenosyl-L-homocysteine: step 1/1. Its function is as follows. May play a key role in the regulation of the intracellular concentration of adenosylhomocysteine. This Pseudomonas putida (strain ATCC 700007 / DSM 6899 / JCM 31910 / BCRC 17059 / LMG 24140 / F1) protein is Adenosylhomocysteinase.